The chain runs to 156 residues: Ribosomal RNA large subunit methyltransferase H (156 aa).

Residues Leu-73, Gly-104, and Leu-123–Leu-128 contribute to the S-adenosyl-L-methionine site.

Belongs to the RNA methyltransferase RlmH family. In terms of assembly, homodimer.

It localises to the cytoplasm. It carries out the reaction pseudouridine(1915) in 23S rRNA + S-adenosyl-L-methionine = N(3)-methylpseudouridine(1915) in 23S rRNA + S-adenosyl-L-homocysteine + H(+). Specifically methylates the pseudouridine at position 1915 (m3Psi1915) in 23S rRNA. This chain is Ribosomal RNA large subunit methyltransferase H, found in Edwardsiella ictaluri (strain 93-146).